Here is a 253-residue protein sequence, read N- to C-terminus: 5'-nucleotidase SurE (253 aa).

Asp-8, Asp-9, Ser-40, and Asn-93 together coordinate a divalent metal cation.

This sequence belongs to the SurE nucleotidase family. Requires a divalent metal cation as cofactor.

The protein localises to the cytoplasm. The enzyme catalyses a ribonucleoside 5'-phosphate + H2O = a ribonucleoside + phosphate. Functionally, nucleotidase that shows phosphatase activity on nucleoside 5'-monophosphates. The protein is 5'-nucleotidase SurE of Methylobacterium nodulans (strain LMG 21967 / CNCM I-2342 / ORS 2060).